We begin with the raw amino-acid sequence, 963 residues long: Non-ribosomal peptide synthetase CmlP (963 aa).

The Carrier domain occupies 492-568; sequence GEDAAELRRV…AAFLRHLRGE (77 aa). The residue at position 526 (serine 526) is an O-(pantetheine 4'-phosphoryl)serine. Residues 928-963 form a disordered region; that stretch reads GRLLGTPPDTPAGDRPERTGTTAEAQNGAAHAPTPR.

It belongs to the ATP-dependent AMP-binding enzyme family. The cofactor is pantetheine 4'-phosphate.

It catalyses the reaction 4-amino-L-phenylalanine + holo-[peptidyl-carrier protein] + ATP = 4-amino-L-phenylalanyl-[peptidyl-carrier protein] + AMP + diphosphate. It functions in the pathway antibiotic biosynthesis. In terms of biological role, involved in chloramphenicol biosynthesis. Activates 4-amino-L-phenylalanine by adenylation and loads it onto its peptidyl carrier domain, via a thioester linkage to the phosphopanthetheine moiety. Can also adenylate tyrosine and phenylalanine at low rates, but not L-p-nitrophenylalanine or threo-phenylserine. This chain is Non-ribosomal peptide synthetase CmlP, found in Streptomyces venezuelae (strain ATCC 10712 / CBS 650.69 / DSM 40230 / JCM 4526 / NBRC 13096 / PD 04745).